The following is a 162-amino-acid chain: MNDRELDLTEEQKALKAKYPPITKKYEYLDHTADVQIHSWGNSLEEAFEQCAMGMFGYMTDTETVEPIDTVEVESEGDDMESLLYHFLDDWLFKFSADIFFIPREVKVLHIDRMRYKIRSIGWGEEFSINKHPQGTEVKAITYSAMQIHETEQPEIFVIIDI.

Residues aspartate 34, aspartate 161, and isoleucine 162 each coordinate Ca(2+).

It belongs to the archease family. Component of the tRNA-splicing ligase complex.

Functionally, component of the tRNA-splicing ligase complex required to facilitate the enzymatic turnover of catalytic subunit RTCB. Together with ddx1, acts by facilitating the guanylylation of RTCB, a key intermediate step in tRNA ligation. The chain is Protein archease (zbtb8os) from Danio rerio (Zebrafish).